The primary structure comprises 316 residues: Beta-ketoacyl-[acyl-carrier-protein] synthase III (316 aa).

Residues Cys112 and His243 contribute to the active site. Residues 244 to 248 (QANLR) are ACP-binding. Residue Asn273 is part of the active site.

This sequence belongs to the thiolase-like superfamily. FabH family. As to quaternary structure, homodimer.

Its subcellular location is the cytoplasm. The catalysed reaction is malonyl-[ACP] + acetyl-CoA + H(+) = 3-oxobutanoyl-[ACP] + CO2 + CoA. It participates in lipid metabolism; fatty acid biosynthesis. Catalyzes the condensation reaction of fatty acid synthesis by the addition to an acyl acceptor of two carbons from malonyl-ACP. Catalyzes the first condensation reaction which initiates fatty acid synthesis and may therefore play a role in governing the total rate of fatty acid production. Possesses both acetoacetyl-ACP synthase and acetyl transacylase activities. Its substrate specificity determines the biosynthesis of branched-chain and/or straight-chain of fatty acids. In Haemophilus influenzae (strain 86-028NP), this protein is Beta-ketoacyl-[acyl-carrier-protein] synthase III.